Reading from the N-terminus, the 168-residue chain is 3'-5' exoribonuclease MT2234.1 (168 aa).

Aspartate 6 provides a ligand contact to Mg(2+). Residues 6-9 (DTEF) form an RNA binding region.

In terms of assembly, homodimer. Mg(2+) is required as a cofactor.

Functionally, exonuclease that cleaves single-stranded 3' overhangs of double-stranded RNA. The chain is 3'-5' exoribonuclease MT2234.1 from Mycobacterium tuberculosis (strain CDC 1551 / Oshkosh).